We begin with the raw amino-acid sequence, 986 residues long: Ephrin type-B receptor 2 (986 aa).

The signal sequence occupies residues 1-18 (MAVRRLGAALLLLPLLAA). The Extracellular segment spans residues 19–543 (VEETLMDSTT…QTSIKEKLPL (525 aa)). Positions 20–202 (EETLMDSTTA…FYRKCPRIIQ (183 aa)) constitute an Eph LBD domain. Disulfide bonds link cysteine 62–cysteine 184 and cysteine 97–cysteine 107. Asparagine 265, asparagine 336, asparagine 428, and asparagine 482 each carry an N-linked (GlcNAc...) asparagine glycan. 2 consecutive Fibronectin type-III domains span residues 324 to 434 (IPSA…TNQA) and 435 to 530 (APSA…TMTE). The helical transmembrane segment at 544–564 (IVGSSAAGLVFLIAVVVIAIV) threads the bilayer. The Cytoplasmic segment spans residues 565 to 986 (CNRRGFERAD…QMNQIQSVEV (422 aa)). The Protein kinase domain maps to 621-884 (VKIEQVIGAG…QIVNTLDKMI (264 aa)). Residues 627–635 (IGAGEFGEV) and lysine 653 contribute to the ATP site. The active-site Proton acceptor is aspartate 746. A Glycyl lysine isopeptide (Lys-Gly) (interchain with G-Cter in ubiquitin) cross-link involves residue lysine 891. An SAM domain is found at 913–977 (TSFNTVDEWL…LNSIQVMRAQ (65 aa)). The PDZ-binding motif lies at 984-986 (VEV).

It belongs to the protein kinase superfamily. Tyr protein kinase family. Ephrin receptor subfamily. In terms of assembly, heterotetramer upon binding of the ligand. The heterotetramer is composed of an ephrin dimer and a receptor dimer. Interacts (via PDZ-binding motif) with GRIP1 and PICK1 (via PDZ domain). Interacts with ARHGEF15; mediates ARHGEF15 phosphorylation, ubiquitination and degradation by the proteasome. Interacts with AQP1; involved in endolymph production in the inner ear. Interacts with EFNA5. Interacts with SPSB1. Interacts with SPSB4. Interacts with SH2D3C. Post-translationally, autophosphorylated; ligand binding stimulates autophosphorylation on tyrosine residues. In terms of processing, ligand binding induces cleavage by matrix metalloproteinases (MMPs) such as MMP7/MMP9, producing an EphB2/N-terminal fragment (NTF) and a C-terminal long fragment (EphB2-LF). EphB2-LF is further cleaved by MMPs, producing EphB2/CTF1 which is further cleaved by the PS1/gamma-secretase producing EphB2/CTF2. Polyubiquitinated; ligand binding stimulates ubiquitination. Ubiquitinated by RNF186 at Lys-891, mainly through 'Lys-27'-linked polyubiquitin chains. Ubiquitinated by CRL2(KLHDC2) E3 ligase complex. Expressed in the epithelial dark cells of the inner ear. Expressed in the region of the proximal tubules of the kidney nephron. Expressed in myogenic progenitor cells.

Its subcellular location is the cell membrane. The protein resides in the cell projection. It localises to the axon. The protein localises to the dendrite. The enzyme catalyses L-tyrosyl-[protein] + ATP = O-phospho-L-tyrosyl-[protein] + ADP + H(+). In terms of biological role, receptor tyrosine kinase which binds promiscuously transmembrane ephrin-B family ligands residing on adjacent cells, leading to contact-dependent bidirectional signaling into neighboring cells. The signaling pathway downstream of the receptor is referred to as forward signaling while the signaling pathway downstream of the ephrin ligand is referred to as reverse signaling. Functions in axon guidance during development. Involved in the guidance of commissural axons, that form a major interhemispheric connection between the 2 temporal lobes of the cerebral cortex. Also involved in guidance of contralateral inner ear efferent growth cones at the midline and of retinal ganglion cell axons to the optic disk. In addition to axon guidance, also regulates dendritic spines development and maturation and stimulates the formation of excitatory synapses. Upon activation by EFNB1, abolishes the ARHGEF15-mediated negative regulation on excitatory synapse formation. Controls other aspects of development including angiogenesis, palate development and in inner ear development through regulation of endolymph production. Forward and reverse signaling through the EFNB2/EPHB2 complex regulate movement and adhesion of cells that tubularize the urethra and septate the cloaca. May function as a tumor suppressor. May be involved in the regulation of platelet activation and blood coagulation. In Mus musculus (Mouse), this protein is Ephrin type-B receptor 2.